The following is a 462-amino-acid chain: SET domain-containing protein SmydA-8, isoform A (462 aa).

One can recognise an SET domain in the interval 55-287 (PNWTISSSTV…KGGEITTTYT (233 aa)).

It belongs to the class V-like SAM-binding methyltransferase superfamily.

In Drosophila melanogaster (Fruit fly), this protein is SET domain-containing protein SmydA-8, isoform A.